The primary structure comprises 395 residues: Zinc finger protein 200 (395 aa).

The segment at 157-208 (VNGSNPEGEDPEREPVENEDYREKSSDDDEMDSSLVSQQPPDNQEKERLNTS) is disordered. Residues 169-181 (REPVENEDYREKS) are compositionally biased toward basic and acidic residues. Residues 246–395 (RRTRRWYTCP…HSACKTRKQK (150 aa)) are interaction with PRMT3. C2H2-type zinc fingers lie at residues 252–274 (YTCP…QRTH), 280–302 (YDCN…ERIH), 308–330 (YSCS…EGIH), 336–358 (FKCP…LQSH), and 364–386 (YGCK…EKTH).

Interacts (via C-terminus) with PRMT3 (via zinc-finger); the interaction is direct and required to localize protein arginine N-methyltransferase PRMT3 to the nucleus and inhibit its proteasomal degradation. As to expression, highly expressed in testis, weakly expressed in spleen, thymus, prostate, ovary, small intestine colon and peripheral blood leukocytes.

It is found in the nucleus. Its function is as follows. Localizes protein arginine N-methyltransferase PRMT3 to the nucleus. This is Zinc finger protein 200 (ZNF200) from Homo sapiens (Human).